Reading from the N-terminus, the 198-residue chain is Probable GTP-binding protein EngB (198 aa).

The 174-residue stretch at 22-195 folds into the EngB-type G domain; it reads DLPEIALAGR…WKAIHKMTKT (174 aa). Residues 30–37, 57–61, 75–78, 142–145, and 174–176 contribute to the GTP site; these read GRSNVGKS, GKTQT, DVPG, TKAD, and FSS. The Mg(2+) site is built by serine 37 and threonine 59.

This sequence belongs to the TRAFAC class TrmE-Era-EngA-EngB-Septin-like GTPase superfamily. EngB GTPase family. Mg(2+) serves as cofactor.

Functionally, necessary for normal cell division and for the maintenance of normal septation. The chain is Probable GTP-binding protein EngB from Bacillus cereus (strain G9842).